The sequence spans 607 residues: Large ribosomal subunit assembly factor BipA (607 aa).

The tr-type G domain occupies 3–198; sequence HSIRNIAIIA…SIIKYAPAPN (196 aa). Residues 15 to 20 and 128 to 131 contribute to the GTP site; these read DHGKTT and NKID.

Belongs to the TRAFAC class translation factor GTPase superfamily. Classic translation factor GTPase family. BipA subfamily. As to quaternary structure, monomer.

The protein localises to the cytoplasm. The enzyme catalyses GTP + H2O = GDP + phosphate + H(+). Its function is as follows. A 50S ribosomal subunit assembly protein with GTPase activity, required for 50S subunit assembly at low temperatures, may also play a role in translation. Binds GTP and analogs. Binds the 70S ribosome between the 30S and 50S subunits, in a similar position as ribosome-bound EF-G; it contacts a number of ribosomal proteins, both rRNAs and the A-site tRNA. The chain is Large ribosomal subunit assembly factor BipA from Buchnera aphidicola subsp. Acyrthosiphon pisum (strain APS) (Acyrthosiphon pisum symbiotic bacterium).